The primary structure comprises 405 residues: MTQATSERVIWRNARLATLNPDYSQPYGLLERHALLVRNGRIEAIVADADAPGGRSIDLEGRLVTPGLIDCHTHLIFGGSRAQEWEQRLNGVSYQTISANGGGINSTVRATRDSSEAELLALAQPRLARLLREGVTTLEIKSGYGLDLQNERKMLRVARQLADDNGVELSATLLSAHATPPEYHGDADGYISLVCETILPTLWQEGLFESVDVFCENVGFSPQQTERVFQAAQALGIPVKGHVEQLSSLGGAQLVSRYHGLSADHIEYLTEEGVAAMRESGTVAALLPGAFYFLNETRKPPVELLRKYQVPMAVATDFNPGTSPFASLHLAMNMACVKFGLTPEEAWAGVTRHAARALGRQDSHGQLAAGFVANFAIWDAEHPVEMVYEPGRAPLWGRVVRGERQ.

2 residues coordinate Fe(3+): H72 and H74. H72 and H74 together coordinate Zn(2+). 3 residues coordinate 4-imidazolone-5-propanoate: R81, Y144, and H177. Residue Y144 coordinates N-formimidoyl-L-glutamate. H242 serves as a coordination point for Fe(3+). H242 serves as a coordination point for Zn(2+). Q245 is a binding site for 4-imidazolone-5-propanoate. D317 contributes to the Fe(3+) binding site. Zn(2+) is bound at residue D317. N-formimidoyl-L-glutamate-binding residues include N319 and G321. T322 serves as a coordination point for 4-imidazolone-5-propanoate.

The protein belongs to the metallo-dependent hydrolases superfamily. HutI family. Requires Zn(2+) as cofactor. Fe(3+) serves as cofactor.

It is found in the cytoplasm. The enzyme catalyses 4-imidazolone-5-propanoate + H2O = N-formimidoyl-L-glutamate. The protein operates within amino-acid degradation; L-histidine degradation into L-glutamate; N-formimidoyl-L-glutamate from L-histidine: step 3/3. Functionally, catalyzes the hydrolytic cleavage of the carbon-nitrogen bond in imidazolone-5-propanoate to yield N-formimidoyl-L-glutamate. It is the third step in the universal histidine degradation pathway. The chain is Imidazolonepropionase from Klebsiella pneumoniae (strain 342).